The chain runs to 332 residues: Adenosine deaminase (332 aa).

Zn(2+)-binding residues include His12 and His14. Positions 14, 16, and 170 each coordinate substrate. Zn(2+) is bound at residue His197. Glu200 (proton donor) is an active-site residue. Asp278 serves as a coordination point for Zn(2+).

This sequence belongs to the metallo-dependent hydrolases superfamily. Adenosine and AMP deaminases family. Adenosine deaminase subfamily. Zn(2+) serves as cofactor.

The catalysed reaction is adenosine + H2O + H(+) = inosine + NH4(+). It catalyses the reaction 2'-deoxyadenosine + H2O + H(+) = 2'-deoxyinosine + NH4(+). In terms of biological role, catalyzes the hydrolytic deamination of adenosine and 2-deoxyadenosine. The sequence is that of Adenosine deaminase from Clostridium perfringens (strain SM101 / Type A).